The chain runs to 105 residues: Thioredoxin (105 aa).

The region spanning 2-105 (VKSVGNLADF…KLEETIKSLV (104 aa)) is the Thioredoxin domain. Active-site nucleophile residues include cysteine 32 and cysteine 35. An intrachain disulfide couples cysteine 32 to cysteine 35. Cysteine 69 and cysteine 73 each carry S-nitrosocysteine.

This sequence belongs to the thioredoxin family. In terms of processing, may be nitrosylated on several cysteine residues, depending on the oxidation state. Nitrosylated Cys-73 may serve as donor for nitrosylation of target proteins.

It is found in the nucleus. The protein localises to the cytoplasm. The protein resides in the secreted. Functionally, participates in various redox reactions through the reversible oxidation of its active center dithiol to a disulfide and catalyzes dithiol-disulfide exchange reactions. Plays a role in the reversible S-nitrosylation of cysteine residues in target proteins, and thereby contributes to the response to intracellular nitric oxide. Nitrosylates the active site Cys of CASP3 in response to nitric oxide (NO), and thereby inhibits caspase-3 activity. Induces the FOS/JUN AP-1 DNA binding activity in ionizing radiation (IR) cells through its oxidation/reduction status and stimulates AP-1 transcriptional activity. This Gallus gallus (Chicken) protein is Thioredoxin (TXN).